The chain runs to 71 residues: uncharacterized protein (71 aa).

In terms of domain architecture, Sm spans P15–Y71.

This is an uncharacterized protein from Methanocaldococcus jannaschii (strain ATCC 43067 / DSM 2661 / JAL-1 / JCM 10045 / NBRC 100440) (Methanococcus jannaschii).